The chain runs to 153 residues: NADH dehydrogenase [ubiquinone] 1 beta subcomplex subunit 11, mitochondrial (153 aa).

Residues 1 to 29 constitute a mitochondrion transit peptide; the sequence is MAAGLFGLSARRLLAAAATRGLPAARVRW. Positions 40 to 76 are disordered; it reads PSAVAGKRPPEPTTPWQEDPEPEDENLYEKNPDSHGY. Basic and acidic residues predominate over residues 66 to 76; that stretch reads LYEKNPDSHGY. Residues 89–109 form a helical membrane-spanning segment; it reads LVFFFGVSIILVLGSTFVAYL.

It belongs to the complex I NDUFB11 subunit family. As to quaternary structure, complex I is composed of 45 different subunits. Interacts with BCAP31. In terms of tissue distribution, ubiquitous.

Its subcellular location is the mitochondrion inner membrane. In terms of biological role, accessory subunit of the mitochondrial membrane respiratory chain NADH dehydrogenase (Complex I), that is believed not to be involved in catalysis. Complex I functions in the transfer of electrons from NADH to the respiratory chain. The immediate electron acceptor for the enzyme is believed to be ubiquinone. The chain is NADH dehydrogenase [ubiquinone] 1 beta subcomplex subunit 11, mitochondrial (NDUFB11) from Homo sapiens (Human).